Here is a 503-residue protein sequence, read N- to C-terminus: U6 snRNA (guanine-N(2))-methyltransferase THUMPD2 (503 aa).

The THUMP domain occupies 161 to 266; the sequence is CQLEKQIKEE…DIYSVVGIPV (106 aa).

This sequence belongs to the methyltransferase superfamily. In terms of assembly, part of the heterodimeric THUMPD2-TRM112 methyltransferase complex; this complex forms an active tRNA methyltransferase, where TRMT112 acts as an activator of the catalytic subunit THUMPD2. Expressed in a variety of tissues including brain, colon, gingiva, heart, kidney, liver, lung, placenta, small intestine, spleen and thymus.

The protein localises to the nucleus. It catalyses the reaction guanosine in U6 snRNA + S-adenosyl-L-methionine = N(2)-methylguanosine in U6 snRNA + S-adenosyl-L-homocysteine + H(+). Functionally, catalytic subunit of the THUMPD2-TRM112 methyltransferase complex, that specifically mediates the S-adenosyl-L-methionine-dependent N(2)-methylation of guanosine nucleotides, most probably at position 72 (m2G72), in the U6snRNA of the major spliceosome. This modification in the U6 snRNA affects the constitutive splicing efficiency of introns that have suboptimal splice sites and can impact final mRNA levels. In Homo sapiens (Human), this protein is U6 snRNA (guanine-N(2))-methyltransferase THUMPD2.